The sequence spans 578 residues: Longifolene synthase (578 aa).

Positions 331, 335, and 475 each coordinate Mg(2+). Residues 331–335 carry the DDXXD motif motif; it reads DDLYD.

This sequence belongs to the terpene synthase family. Tpsd subfamily. Requires Mg(2+) as cofactor. It depends on Mn(2+) as a cofactor.

The protein localises to the cytoplasm. The enzyme catalyses (2E,6E)-farnesyl diphosphate = longifolene + diphosphate. The protein operates within sesquiterpene biosynthesis. It functions in the pathway terpene metabolism; oleoresin biosynthesis. Involved in defensive oleoresin formation in conifers in response to insect attack or other injury. Involved in sesquiterpene (C15) olefins biosynthesis. Produces mainly longifolene, but also multiple minor products including alpha-longipinene, alpha-longicyclene, E-beta-farnesene, longiborneol, cyclosativene, beta-longipinene, and 12 other sesquiterpenes when used with farnesyl diphosphate (FPP) as substrate. In Picea abies (Norway spruce), this protein is Longifolene synthase (TPS-Lon).